Here is a 162-residue protein sequence, read N- to C-terminus: D-beta-D-heptose 1-phosphate adenylyltransferase (162 aa).

The catalysed reaction is D-glycero-beta-D-manno-heptose 1-phosphate + ATP + H(+) = ADP-D-glycero-beta-D-manno-heptose + diphosphate. It participates in nucleotide-sugar biosynthesis; ADP-L-glycero-beta-D-manno-heptose biosynthesis; ADP-L-glycero-beta-D-manno-heptose from D-glycero-beta-D-manno-heptose 7-phosphate: step 3/4. The protein operates within bacterial outer membrane biogenesis; LPS core biosynthesis. Functionally, catalyzes the ADP transfer from ATP to D-glycero-beta-D-manno-heptose 1-phosphate, yielding ADP-D-glycero-beta-D-manno-heptose. Cannot use GTP, UTP, or CTP as substrate. Is not active against the alpha-anomer substrate. Is also able to catalyze the ADP transfer to beta-glucose 1-phosphate in vitro, yielding ADP-beta-glucose. The sequence is that of D-beta-D-heptose 1-phosphate adenylyltransferase from Bordetella bronchiseptica (strain ATCC BAA-588 / NCTC 13252 / RB50) (Alcaligenes bronchisepticus).